The chain runs to 332 residues: Glycerol-3-phosphate dehydrogenase [NAD(P)+] (332 aa).

NADPH-binding residues include Trp-11, Arg-30, and Lys-108. Sn-glycerol 3-phosphate is bound by residues Lys-108, Gly-137, and Ser-139. An NADPH-binding site is contributed by Ala-141. The sn-glycerol 3-phosphate site is built by Lys-192, Asp-245, Ser-255, Arg-256, and Asn-257. The active-site Proton acceptor is Lys-192. NADPH is bound at residue Arg-256. Residues Val-280 and Glu-282 each coordinate NADPH.

The protein belongs to the NAD-dependent glycerol-3-phosphate dehydrogenase family.

Its subcellular location is the cytoplasm. The enzyme catalyses sn-glycerol 3-phosphate + NAD(+) = dihydroxyacetone phosphate + NADH + H(+). It carries out the reaction sn-glycerol 3-phosphate + NADP(+) = dihydroxyacetone phosphate + NADPH + H(+). It participates in membrane lipid metabolism; glycerophospholipid metabolism. Functionally, catalyzes the reduction of the glycolytic intermediate dihydroxyacetone phosphate (DHAP) to sn-glycerol 3-phosphate (G3P), the key precursor for phospholipid synthesis. The polypeptide is Glycerol-3-phosphate dehydrogenase [NAD(P)+] (Burkholderia orbicola (strain AU 1054)).